Here is an 872-residue protein sequence, read N- to C-terminus: Chaperone protein ClpB 2 (872 aa).

The Clp R domain maps to 6–148 (PNKFTEKAWE…AEIIKQIRGT (143 aa)). 2 repeat regions span residues 9 to 73 (FTEK…IAQQ) and 85 to 148 (LGRS…IRGT). An NBD1 region spans residues 161-342 (ESLEKYGRDL…RRFQEVLVDE (182 aa)). 208 to 215 (GEPGVGKT) contributes to the ATP binding site. Residues 343–551 (PNVLDTISIL…IAEIISKWTG (209 aa)) form a linker region. Positions 393-527 (IDLVDEAAAK…LETQLAEQQT (135 aa)) form a coiled coil. The segment at 561–772 (EKEKLLHLED…RVDETIIFHG (212 aa)) is NBD2. Position 611 to 618 (611 to 618 (GPTGVGKT)) interacts with ATP. Positions 773–872 (LQKSELRSIV…TSLRGDLVIV (100 aa)) are C-terminal.

The protein belongs to the ClpA/ClpB family. Homohexamer. The oligomerization is ATP-dependent.

The protein resides in the cytoplasm. Part of a stress-induced multi-chaperone system, it is involved in the recovery of the cell from heat-induced damage, in cooperation with DnaK, DnaJ and GrpE. Acts before DnaK, in the processing of protein aggregates. Protein binding stimulates the ATPase activity; ATP hydrolysis unfolds the denatured protein aggregates, which probably helps expose new hydrophobic binding sites on the surface of ClpB-bound aggregates, contributing to the solubilization and refolding of denatured protein aggregates by DnaK. This is Chaperone protein ClpB 2 (clpB2) from Synechocystis sp. (strain ATCC 27184 / PCC 6803 / Kazusa).